Here is a 271-residue protein sequence, read N- to C-terminus: NADPH-dependent 7-cyano-7-deazaguanine reductase (271 aa).

79-81 (IES) contributes to the substrate binding site. 81 to 82 (SK) provides a ligand contact to NADPH. Catalysis depends on Cys-178, which acts as the Thioimide intermediate. Asp-185 functions as the Proton donor in the catalytic mechanism. 217 to 218 (HE) contacts substrate. 246–247 (RG) lines the NADPH pocket.

This sequence belongs to the GTP cyclohydrolase I family. QueF type 2 subfamily. In terms of assembly, homodimer.

The protein localises to the cytoplasm. It catalyses the reaction 7-aminomethyl-7-carbaguanine + 2 NADP(+) = 7-cyano-7-deazaguanine + 2 NADPH + 3 H(+). It participates in tRNA modification; tRNA-queuosine biosynthesis. Functionally, catalyzes the NADPH-dependent reduction of 7-cyano-7-deazaguanine (preQ0) to 7-aminomethyl-7-deazaguanine (preQ1). The polypeptide is NADPH-dependent 7-cyano-7-deazaguanine reductase (Acinetobacter baylyi (strain ATCC 33305 / BD413 / ADP1)).